A 454-amino-acid chain; its full sequence is Putative flavin-containing monoamine oxidase AofH (454 aa).

This sequence belongs to the flavin monoamine oxidase family. The cofactor is FAD.

This chain is Putative flavin-containing monoamine oxidase AofH (aofH), found in Mycobacterium tuberculosis (strain CDC 1551 / Oshkosh).